The sequence spans 271 residues: Purine nucleoside phosphorylase 1 (271 aa).

Phosphate-binding positions include Ser28, His59, 79-81 (RFH), and Ala111. Ser28 carries the phosphoserine modification. Glu191 contacts a purine D-ribonucleoside. Ser210 provides a ligand contact to phosphate. Asn233 is an a purine D-ribonucleoside binding site.

It belongs to the PNP/MTAP phosphorylase family. As to quaternary structure, homotrimer.

It carries out the reaction a purine 2'-deoxy-D-ribonucleoside + phosphate = a purine nucleobase + 2-deoxy-alpha-D-ribose 1-phosphate. Its pathway is purine metabolism; purine nucleoside salvage. In terms of biological role, the purine nucleoside phosphorylases catalyze the phosphorolytic breakdown of the N-glycosidic bond in the beta-(deoxy)ribonucleoside molecules, with the formation of the corresponding free purine bases and pentose-1-phosphate. Cleaves guanosine, inosine, 2'-deoxyguanosine and 2'-deoxyinosine. This is Purine nucleoside phosphorylase 1 (punA) from Bacillus subtilis (strain 168).